A 582-amino-acid polypeptide reads, in one-letter code: Hemagglutinin-neuraminidase (582 aa).

At 1 to 34 the chain is on the intravirion side; it reads MEPSKLFTMSDNATFAPGPVVNAADKKTFRTCFR. A helical transmembrane segment spans residues 35-55; the sequence is ILVLSVQAVTLILVIVTLGEL. The Virion surface portion of the chain corresponds to 56 to 582; sequence VRMINDQGLS…LPVLTRLTIT (527 aa). 3 disulfide bridges follow: C178-C202, C192-C253, and C244-C257. Residues N284 and N329 are each glycosylated (N-linked (GlcNAc...) asparagine; by host). 3 disulfide bridges follow: C350/C471, C382/C392, and C465/C475. N-linked (GlcNAc...) asparagine; by host glycans are attached at residues N400 and N448. N-linked (GlcNAc...) asparagine; by host glycosylation is present at N507. A disulfide bond links C545 and C556.

This sequence belongs to the paramyxoviruses hemagglutinin-neuraminidase family. As to quaternary structure, homotetramer; composed of disulfide-linked homodimers. Interacts with F protein trimer.

The protein localises to the virion membrane. It localises to the host cell membrane. It catalyses the reaction Hydrolysis of alpha-(2-&gt;3)-, alpha-(2-&gt;6)-, alpha-(2-&gt;8)- glycosidic linkages of terminal sialic acid residues in oligosaccharides, glycoproteins, glycolipids, colominic acid and synthetic substrates.. In terms of biological role, attaches the virus to alpha-2,3-linked sialic acid-containing cell receptors and thereby initiating infection. Binding of HN protein to the receptor induces a conformational change that allows the F protein to trigger virion/cell membranes fusion. Binds to the glycan motifs sialyl Lewis (SLe) and GM2 ganglioside (GM2-glycan). Neuraminidase activity ensures the efficient spread of the virus by dissociating the mature virions from the neuraminic acid containing glycoproteins. The chain is Hemagglutinin-neuraminidase from Mumps orthorubulavirus (MuV).